The chain runs to 152 residues: Xanthine-guanine phosphoribosyltransferase (152 aa).

Residues 37 to 38, Arg-69, and 88 to 96 each bind 5-phospho-alpha-D-ribose 1-diphosphate; these read RG and DDLVDTGGT. Position 69 (Arg-69) interacts with GMP. Asp-89 lines the Mg(2+) pocket. Residues Asp-92 and Ile-135 each coordinate guanine. Xanthine contacts are provided by Asp-92 and Ile-135. GMP contacts are provided by residues 92–96 and 134–135; these read DTGGT and WI.

Belongs to the purine/pyrimidine phosphoribosyltransferase family. XGPT subfamily. Homotetramer. Mg(2+) is required as a cofactor.

The protein resides in the cell inner membrane. It carries out the reaction GMP + diphosphate = guanine + 5-phospho-alpha-D-ribose 1-diphosphate. It catalyses the reaction XMP + diphosphate = xanthine + 5-phospho-alpha-D-ribose 1-diphosphate. The enzyme catalyses IMP + diphosphate = hypoxanthine + 5-phospho-alpha-D-ribose 1-diphosphate. Its pathway is purine metabolism; GMP biosynthesis via salvage pathway; GMP from guanine: step 1/1. It participates in purine metabolism; XMP biosynthesis via salvage pathway; XMP from xanthine: step 1/1. Functionally, purine salvage pathway enzyme that catalyzes the transfer of the ribosyl-5-phosphate group from 5-phospho-alpha-D-ribose 1-diphosphate (PRPP) to the N9 position of the 6-oxopurines guanine and xanthine to form the corresponding ribonucleotides GMP (guanosine 5'-monophosphate) and XMP (xanthosine 5'-monophosphate), with the release of PPi. To a lesser extent, also acts on hypoxanthine. The polypeptide is Xanthine-guanine phosphoribosyltransferase (Shigella boydii serotype 18 (strain CDC 3083-94 / BS512)).